A 493-amino-acid chain; its full sequence is Xaa-Pro dipeptidase (493 aa).

Position 2 is an N-acetylalanine (alanine 2). A Phosphoserine modification is found at serine 167. An a dipeptide-binding site is contributed by histidine 255. Mn(2+)-binding residues include aspartate 276, aspartate 287, and histidine 370. An a dipeptide-binding site is contributed by aspartate 287. 2 residues coordinate a dipeptide: histidine 377 and arginine 398. Positions 412 and 452 each coordinate Mn(2+).

Belongs to the peptidase M24B family. Eukaryotic-type prolidase subfamily. In terms of assembly, homodimer. Requires Mn(2+) as cofactor.

It catalyses the reaction Xaa-L-Pro dipeptide + H2O = an L-alpha-amino acid + L-proline. In terms of biological role, dipeptidase that catalyzes the hydrolysis of dipeptides with a prolyl (Xaa-Pro) or hydroxyprolyl residue in the C-terminal position. The preferred dipeptide substrate is Gly-Pro, but other Xaa-Pro dipeptides, such as Ala-Pro, Met-Pro, Phe-Pro, Val-Pro and Leu-Pro, can be cleaved. Plays an important role in collagen metabolism because the high level of iminoacids in collagen. The sequence is that of Xaa-Pro dipeptidase (Pepd) from Mus musculus (Mouse).